The primary structure comprises 207 residues: Superoxide dismutase [Mn] (207 aa).

Mn(2+)-binding residues include His28, His76, Asp160, and His164.

This sequence belongs to the iron/manganese superoxide dismutase family. Mn(2+) serves as cofactor.

The protein resides in the secreted. The enzyme catalyses 2 superoxide + 2 H(+) = H2O2 + O2. Functionally, destroys superoxide anion radicals which are normally produced within the cells and which are toxic to biological systems. The polypeptide is Superoxide dismutase [Mn] (sodA) (Mycolicibacterium paratuberculosis (strain ATCC BAA-968 / K-10) (Mycobacterium paratuberculosis)).